We begin with the raw amino-acid sequence, 440 residues long: Xaa-Pro dipeptidase (440 aa).

Mn(2+) contacts are provided by Asp-244, Asp-255, His-335, Glu-380, and Glu-419.

The protein belongs to the peptidase M24B family. Bacterial-type prolidase subfamily. Mn(2+) is required as a cofactor.

The catalysed reaction is Xaa-L-Pro dipeptide + H2O = an L-alpha-amino acid + L-proline. Its function is as follows. Splits dipeptides with a prolyl residue in the C-terminal position. This is Xaa-Pro dipeptidase from Shewanella halifaxensis (strain HAW-EB4).